The primary structure comprises 399 residues: Na(+)/H(+) antiporter NhaA (399 aa).

11 helical membrane-spanning segments follow: residues 14–34 (AGGI…NSPL), 59–79 (LIHW…GLEV), 95–115 (SLPT…YLLF), 124–144 (AGWA…MALL), 154–174 (VFLL…IAMF), 177–197 (TDLS…LVGL), 213–233 (LILW…GVII), 261–281 (FIIL…PMSF), 290–310 (VGIA…FSYI), 331–351 (VALM…LAFV), and 363–383 (LGIL…LAKV).

The protein belongs to the NhaA Na(+)/H(+) (TC 2.A.33) antiporter family.

It localises to the cell inner membrane. It carries out the reaction Na(+)(in) + 2 H(+)(out) = Na(+)(out) + 2 H(+)(in). Its function is as follows. Na(+)/H(+) antiporter that extrudes sodium in exchange for external protons. The polypeptide is Na(+)/H(+) antiporter NhaA (Shewanella sediminis (strain HAW-EB3)).